The primary structure comprises 459 residues: ATP-dependent protease ATPase subunit HslU (459 aa).

Residues Val-26, 68-73 (GVGKTE), Asp-271, Glu-337, and Arg-409 each bind ATP.

The protein belongs to the ClpX chaperone family. HslU subfamily. A double ring-shaped homohexamer of HslV is capped on each side by a ring-shaped HslU homohexamer. The assembly of the HslU/HslV complex is dependent on binding of ATP.

The protein resides in the cytoplasm. In terms of biological role, ATPase subunit of a proteasome-like degradation complex; this subunit has chaperone activity. The binding of ATP and its subsequent hydrolysis by HslU are essential for unfolding of protein substrates subsequently hydrolyzed by HslV. HslU recognizes the N-terminal part of its protein substrates and unfolds these before they are guided to HslV for hydrolysis. The chain is ATP-dependent protease ATPase subunit HslU from Xylella fastidiosa (strain M12).